Here is a 104-residue protein sequence, read N- to C-terminus: Putative pterin-4-alpha-carbinolamine dehydratase (104 aa).

The protein belongs to the pterin-4-alpha-carbinolamine dehydratase family.

It catalyses the reaction (4aS,6R)-4a-hydroxy-L-erythro-5,6,7,8-tetrahydrobiopterin = (6R)-L-erythro-6,7-dihydrobiopterin + H2O. The polypeptide is Putative pterin-4-alpha-carbinolamine dehydratase (pcbD) (Rhizobium meliloti (strain 1021) (Ensifer meliloti)).